The following is a 1368-amino-acid chain: DNA-directed RNA polymerase subunit beta (1368 aa).

The protein belongs to the RNA polymerase beta chain family. The RNAP catalytic core consists of 2 alpha, 1 beta, 1 beta' and 1 omega subunit. When a sigma factor is associated with the core the holoenzyme is formed, which can initiate transcription.

The catalysed reaction is RNA(n) + a ribonucleoside 5'-triphosphate = RNA(n+1) + diphosphate. Its function is as follows. DNA-dependent RNA polymerase catalyzes the transcription of DNA into RNA using the four ribonucleoside triphosphates as substrates. This Ralstonia nicotianae (strain ATCC BAA-1114 / GMI1000) (Ralstonia solanacearum) protein is DNA-directed RNA polymerase subunit beta.